The primary structure comprises 783 residues: BMP/retinoic acid-inducible neural-specific protein 2 (783 aa).

Positions 1–33 (MRWPCSSWFRGLWPEAAPWAVLLALGVPGWVLA) are cleaved as a signal peptide. The MACPF domain maps to 85 to 281 (RYRIYREFAR…FVAAALSYIT (197 aa)). Residues Asn185, Asn354, Asn473, Asn579, Asn626, and Asn658 are each glycosylated (N-linked (GlcNAc...) asparagine).

It belongs to the BRINP family. In terms of tissue distribution, weakly expressed in embryonic stem (ES) cells. Strongly expressed in ES-derived neural stem cells (NSCs).

Its subcellular location is the secreted. In terms of biological role, inhibits neuronal cell proliferation by negative regulation of the cell cycle transition. This is BMP/retinoic acid-inducible neural-specific protein 2 (Brinp2) from Mus musculus (Mouse).